A 341-amino-acid polypeptide reads, in one-letter code: Zinc finger protein ZIC 4 (341 aa).

The interval 36–66 is disordered; it reads HHGPQLAASSNPSVLPGLHEQPPQASHSRPL. The C2H2-type 1; atypical zinc-finger motif lies at 135 to 169; sequence LICKWLGDDSPMSPRPCSKTFSTMHELVTHVTVEH. Residues 178–205 form a C2H2-type 2; atypical zinc finger; that stretch reads HICFWEECPRQGKPFKAKYKLVNHIRVH. 3 consecutive C2H2-type zinc fingers follow at residues 211–235, 241–265, and 271–295; these read FPCPFPGCGKVFARSENLKIHKRTH, FRCEFEGCERRFANSSDRKKHSHVH, and YMCKVRGCDKCYTHPSSLRKHMKVH. Positions 289 to 309 are disordered; the sequence is RKHMKVHGRSPPPSSGYDSAI.

Belongs to the GLI C2H2-type zinc-finger protein family. Exclusively expressed in the cerebellum.

It is found in the nucleus. Its function is as follows. Binds to DNA. The protein is Zinc finger protein ZIC 4 (Zic4) of Mus musculus (Mouse).